The following is a 67-amino-acid chain: Large ribosomal subunit protein bL31 (67 aa).

The protein belongs to the bacterial ribosomal protein bL31 family. Type A subfamily. As to quaternary structure, part of the 50S ribosomal subunit.

Its function is as follows. Binds the 23S rRNA. This Leptospira borgpetersenii serovar Hardjo-bovis (strain JB197) protein is Large ribosomal subunit protein bL31.